The primary structure comprises 593 residues: MLPAHKQTLEALLADSVKQVAHALKGADAAFVAPAITLERPKVAAHGDVACNVAMQLAKPLGTNPRQLAEQIVAALTAQPAAQGLVEAAEIAGPGFINLRLSAAAKQAVIAAVFDQGRAFGTSDREKGKQVLLEFVSANPTGPLHVGHGRQAALGDVLANVIASQGYAVHREFYYNDAGVQIGNLAISTQARARGLKPGDAGWPEAAYNGEYIADIARDYLNGETVAASDGEPVKGTGDVEDLDAIRKFAVTYLRREQDMDLQAFGVKFDQYYLESSLYSEGRVEKTVDALVKAGMTYEQDGALWLRTTDEGDDKDRVMRKSDGTYTYFVPDVAYHVTKWERGFTKVINIQGSDHHGTIARVRAGLQGLHIGIPKGYPDYVLHKMVTVMRDGQEVKISKRAGSYVTVRDLIEWSGGAAAGQEAAPDLIDEATITRGRDAVRFFLISRKADTEFVFDIDLALKQNDENPVYYVQYAHARICSVLNELKSRYNVDVAQLPGADLSQLTSAQATSLMQKLAEYPDMLTHAANELAPHAVAFYLRDLAGEFHSFYNAERVLVDDAAPRNARAALLAATRQVLENGLAMLGVSAPAKM.

Positions 138–148 (ANPTGPLHVGH) match the 'HIGH' region motif.

Belongs to the class-I aminoacyl-tRNA synthetase family. Monomer.

The protein localises to the cytoplasm. The catalysed reaction is tRNA(Arg) + L-arginine + ATP = L-arginyl-tRNA(Arg) + AMP + diphosphate. The sequence is that of Arginine--tRNA ligase from Burkholderia cenocepacia (strain ATCC BAA-245 / DSM 16553 / LMG 16656 / NCTC 13227 / J2315 / CF5610) (Burkholderia cepacia (strain J2315)).